A 344-amino-acid chain; its full sequence is Leucine-rich repeat-containing protein 75A (344 aa).

Residues 1–25 (MGTRQTKGSLAERASPGAAPGPRRE) form a disordered region. Low complexity predominate over residues 11 to 21 (AERASPGAAPG). LRR repeat units follow at residues 204–217 (VDSV…LTDD) and 229–242 (LPRL…GNRL). The disordered stretch occupies residues 295–344 (LPTILELGEGPGSGEEVREGTVGQEDPGGGPVAPAEDHHEGKETVAAAQT).

It belongs to the LRRC75 family.

This is Leucine-rich repeat-containing protein 75A (LRRC75A) from Homo sapiens (Human).